A 589-amino-acid chain; its full sequence is Intermediate filament protein ifb-1 (589 aa).

The segment at 1–42 is disordered; sequence MSSHKESSEYEMQYRSTIQPRTAVRSQSRQSGNYVSGGNGAG. Residues 8–84 are head; that stretch reads SEYEMQYRST…LEATDKEKKT (77 aa). Positions 14-30 are enriched in polar residues; the sequence is YRSTIQPRTAVRSQSRQ. The 353-residue stretch at 81-433 folds into the IF rod domain; that stretch reads EKKTLQGLND…KMLEGEETRV (353 aa). The interval 85–116 is coil 1A; sequence LQGLNDRLGNYIDRVKKLEEQNRKLVADLDEL. A linker 1 region spans residues 117-130; that stretch reads RGKWGKDTSEIKIK. The interval 131-268 is coil 1B; the sequence is YSESLSTARK…RVHEQEVKEL (138 aa). Positions 269-285 are linker 12; the sequence is QALLAQAPADTREFFKN. Positions 286–433 are coil 2; that stretch reads ELALAIRDIK…KMLEGEETRV (148 aa). The interval 434–588 is tail; the sequence is GLTQMVEQAV…THTQKTIQSG (155 aa). The tract at residues 444-470 is disordered; the sequence is KTHSLQQQENTDSTRSVRGEVSTKTTF. Positions 466-584 constitute an LTD domain; the sequence is TKTTFQRSAK…EERATHTQKT (119 aa).

This sequence belongs to the intermediate filament family. As to quaternary structure, forms some heteromeric filaments with ifa-1, ifa-2, ifa-3 and probably ifa-4. As to expression, expressed in epidermal cells. Expressed in amphid sensory neurons, the excretory cells, the vulva, the uterus, the rectum and some neurons of the tail. Isoform a and isoform b display a similar pattern of expression. Isoform a is predominant in pharyngeal tonofilaments.

It is found in the cytoplasm. Its function is as follows. Cytoplasmic intermediate filaments provide mechanical strength to cells. Essential protein, involved in attachment structures in epidermal cells that connect muscles to the external cuticle. Required in morphogenesis and epidermal integrity. Probable component of embryonic epidermal attachment structures. Functions in larval muscle attachment independently of ifa-2. This Caenorhabditis elegans protein is Intermediate filament protein ifb-1 (ifb-1).